The following is a 730-amino-acid chain: ABC transporter G family member 20 (730 aa).

The ABC transporter domain maps to 15 to 244; sequence ISLKNVCRGY…YESQTLEEVF (230 aa). Residue 47 to 54 participates in ATP binding; sequence GASGSGKT. Residues 281–303 are disordered; the sequence is VNNNNNNNNNNNNNNYNNNDDEE. A compositionally biased stretch (low complexity) spans 282–298; it reads NNNNNNNNNNNNNNYNN. The ABC transmembrane type-2 domain occupies 489–717; sequence SFETLAKQQA…FIAVLALNEK (229 aa). Transmembrane regions (helical) follow at residues 520-540, 572-592, 602-622, 634-654, and 692-712; these read FIDF…AISI, FLGH…IAIY, IALV…LGLV, IQLS…LWPL, and VWVA…IAVL.

This sequence belongs to the ABC transporter superfamily.

It is found in the membrane. This chain is ABC transporter G family member 20 (abcG20), found in Dictyostelium discoideum (Social amoeba).